We begin with the raw amino-acid sequence, 326 residues long: Protein farnesyltransferase/geranylgeranyltransferase type-1 subunit alpha (326 aa).

5 PFTA repeats span residues 55 to 89, 90 to 124, 126 to 160, 161 to 194, and 201 to 235; these read RSPR…ALNH, DLFE…KLGP, VAGR…ALGG, WEDE…QSPL, and MRES…DDKE.

It belongs to the protein prenyltransferase subunit alpha family. Heterodimer of an alpha and a beta subunit. The cofactor is Mg(2+).

The catalysed reaction is L-cysteinyl-[protein] + (2E,6E)-farnesyl diphosphate = S-(2E,6E)-farnesyl-L-cysteinyl-[protein] + diphosphate. It carries out the reaction geranylgeranyl diphosphate + L-cysteinyl-[protein] = S-geranylgeranyl-L-cysteinyl-[protein] + diphosphate. Its function is as follows. Essential subunit of both the farnesyltransferase and the geranylgeranyltransferase complex. Contributes to the transfer of a farnesyl or geranylgeranyl moiety from farnesyl or geranylgeranyl diphosphate to a cysteine at the fourth position from the C-terminus of several proteins having the C-terminal sequence Cys-aliphatic-aliphatic-X. This is Protein farnesyltransferase/geranylgeranyltransferase type-1 subunit alpha (FTA) from Arabidopsis thaliana (Mouse-ear cress).